The sequence spans 816 residues: tRNA(Met) cytidine acetyltransferase TmcA (816 aa).

Residues glutamine 265 and arginine 439 each contribute to the ATP site. Residues 469 to 664 (ELIRKMEVYL…YTAIVIKPIS (196 aa)) enclose the N-acetyltransferase domain. Acetyl-CoA-binding positions include 589–591 (IAT), glutamate 629, and arginine 636.

This sequence belongs to the TmcA family.

Its subcellular location is the cytoplasm. It carries out the reaction cytidine(34) in elongator tRNA(Met) + acetyl-CoA + ATP + H2O = N(4)-acetylcytidine(34) in elongator tRNA(Met) + ADP + phosphate + CoA + H(+). It catalyses the reaction a cytidine in RNA + acetyl-CoA + ATP + H2O = an N(4)-acetylcytidine in RNA + ADP + phosphate + CoA + H(+). The catalysed reaction is a cytidine in tRNA + acetyl-CoA + ATP + H2O = an N(4)-acetylcytidine in tRNA + ADP + phosphate + CoA + H(+). The enzyme catalyses a cytidine in mRNA + acetyl-CoA + ATP + H2O = an N(4)-acetylcytidine in mRNA + ADP + phosphate + CoA + H(+). Its function is as follows. Catalyzes the formation of N(4)-acetylcytidine (ac(4)C) at the wobble position of tRNA(Met), by using acetyl-CoA as an acetyl donor and ATP (or GTP). In terms of biological role, catalyzes the formation of 233 N(4)-acetylcytidine (ac(4)C) sites in RNA, on the middle C of a CCG motif. Modifications are found in rRNA, ncRNA, mRNA and tRNA. More acetylation is observed at 85 than at 65 or 75 degrees Celsius. This chain is tRNA(Met) cytidine acetyltransferase TmcA, found in Pyrococcus furiosus (strain ATCC 43587 / DSM 3638 / JCM 8422 / Vc1).